We begin with the raw amino-acid sequence, 56 residues long: Small ribosomal subunit protein uS14 (56 aa).

C21, C24, C39, and C42 together coordinate Zn(2+).

This sequence belongs to the universal ribosomal protein uS14 family. Zn(2+) serves as cofactor.

In Guillardia theta (Cryptophyte), this protein is Small ribosomal subunit protein uS14 (rps29A).